A 178-amino-acid polypeptide reads, in one-letter code: Large ribosomal subunit protein uL6 (178 aa).

Belongs to the universal ribosomal protein uL6 family. In terms of assembly, part of the 50S ribosomal subunit.

Its function is as follows. This protein binds to the 23S rRNA, and is important in its secondary structure. It is located near the subunit interface in the base of the L7/L12 stalk, and near the tRNA binding site of the peptidyltransferase center. This Clavibacter sepedonicus (Clavibacter michiganensis subsp. sepedonicus) protein is Large ribosomal subunit protein uL6.